A 207-amino-acid polypeptide reads, in one-letter code: Large ribosomal subunit protein uL4 (207 aa).

The disordered stretch occupies residues 49-78; it reads HAVKNRSAVSGGGRKPWRQKGTGRARQGSI.

Belongs to the universal ribosomal protein uL4 family. As to quaternary structure, part of the 50S ribosomal subunit.

One of the primary rRNA binding proteins, this protein initially binds near the 5'-end of the 23S rRNA. It is important during the early stages of 50S assembly. It makes multiple contacts with different domains of the 23S rRNA in the assembled 50S subunit and ribosome. In terms of biological role, forms part of the polypeptide exit tunnel. The polypeptide is Large ribosomal subunit protein uL4 (Streptococcus pneumoniae serotype 19F (strain G54)).